We begin with the raw amino-acid sequence, 220 residues long: Claudin-22 (220 aa).

Residues 1–10 (MALVFRTVAQ) are Cytoplasmic-facing. A helical membrane pass occupies residues 11-30 (LAGVSLSLLGWVLSCLTNYL). The Extracellular segment spans residues 31–81 (PHWKNLNLDLNEMENWTMGLWQTCVIQEEVGMQCKDFDSFLALPAELRVSR). The helical transmembrane segment at 82–102 (ILMFLSNGLGFLGLLVSGFGL) threads the bilayer. Residues 103–117 (DCLRIGESQRDLKRR) lie on the Cytoplasmic side of the membrane. Residues 118–138 (LLILGGILSWASGVTALVPVS) form a helical membrane-spanning segment. Topologically, residues 139 to 164 (WVAHKTVQEFWDENVPDFVPRWEFGE) are extracellular. Residues 165–185 (ALFLGWFAGLSLLLGGCLLHC) form a helical membrane-spanning segment. Topologically, residues 186-220 (AACSSHAPLASGHYAVAQTQDHHQELETRNTNLKH) are cytoplasmic.

It belongs to the claudin family.

The protein resides in the cell junction. The protein localises to the tight junction. Its subcellular location is the cell membrane. Functionally, plays a major role in tight junction-specific obliteration of the intercellular space, through calcium-independent cell-adhesion activity. This chain is Claudin-22 (CLDN22), found in Homo sapiens (Human).